Here is a 322-residue protein sequence, read N- to C-terminus: tRNA dimethylallyltransferase (322 aa).

12-19 (GPTAAGKT) serves as a coordination point for ATP. 14 to 19 (TAAGKT) lines the substrate pocket. Interaction with substrate tRNA regions lie at residues 37-40 (DSAL) and 160-164 (QRLIR).

It belongs to the IPP transferase family. In terms of assembly, monomer. It depends on Mg(2+) as a cofactor.

The catalysed reaction is adenosine(37) in tRNA + dimethylallyl diphosphate = N(6)-dimethylallyladenosine(37) in tRNA + diphosphate. Catalyzes the transfer of a dimethylallyl group onto the adenine at position 37 in tRNAs that read codons beginning with uridine, leading to the formation of N6-(dimethylallyl)adenosine (i(6)A). The polypeptide is tRNA dimethylallyltransferase (Pseudomonas putida (Arthrobacter siderocapsulatus)).